We begin with the raw amino-acid sequence, 67 residues long: Probable Sec-independent protein translocase protein TatE (67 aa).

A helical transmembrane segment spans residues 1 to 21 (MEGISIAKLLIIGALIVLLFG). Residues 46–67 (EDTSATRTTAEDVPAERVVHKD) are disordered.

It belongs to the TatA/E family. TatE subfamily.

The protein resides in the cell inner membrane. Part of the twin-arginine translocation (Tat) system that transports large folded proteins containing a characteristic twin-arginine motif in their signal peptide across membranes. TatE shares overlapping functions with TatA. In Pantoea vagans (strain C9-1) (Pantoea agglomerans (strain C9-1)), this protein is Probable Sec-independent protein translocase protein TatE.